The sequence spans 261 residues: Chanoclavine-I dehydrogenase easD (261 aa).

Residues isoleucine 18, lysine 48, aspartate 66, arginine 132, tyrosine 166, lysine 170, and threonine 201 each coordinate NADP(+). Tyrosine 166 acts as the Proton donor in catalysis. Lysine 170 acts as the Lowers pKa of active site Tyr in catalysis.

Belongs to the short-chain dehydrogenases/reductases (SDR) family.

The enzyme catalyses chanoclavine-I + NAD(+) = chanoclavine-I aldehyde + NADH + H(+). It participates in alkaloid biosynthesis; ergot alkaloid biosynthesis. Functionally, chanoclavine-I dehydrogenase; part of the gene cluster that mediates the biosynthesis of fumiclavanine C, a fungal ergot alkaloid. DmaW catalyzes the first step of ergot alkaloid biosynthesis by condensing dimethylallyl diphosphate (DMAP) and tryptophan to form 4-dimethylallyl-L-tryptophan. The second step is catalyzed by the methyltransferase easF that methylates 4-dimethylallyl-L-tryptophan in the presence of S-adenosyl-L-methionine, resulting in the formation of 4-dimethylallyl-L-abrine. The catalase easC and the FAD-dependent oxidoreductase easE then transform 4-dimethylallyl-L-abrine to chanoclavine-I which is further oxidized by EasD in the presence of NAD(+), resulting in the formation of chanoclavine-I aldehyde. EasA reduces chanoclavine-I aldehyde to dihydrochanoclavine-I aldehyde that spontaneously dehydrates to form 6,8-dimethyl-6,7-didehydroergoline. EasG then catalyzes the reduction of 6,8-dimethyl-6,7-didehydroergoline to form festuclavine. Hydrolysis of festuclavine by easM then leads to the formation of fumigaclavine B which is in turn acetylated by easN to fumigaclavine A. Finally, easL catalyzes the conversion of fumigaclavine A into fumigaclavine C by attaching a dimethylallyl moiety to C-2 of the indole nucleus. The protein is Chanoclavine-I dehydrogenase easD of Aspergillus fumigatus (strain ATCC MYA-4609 / CBS 101355 / FGSC A1100 / Af293) (Neosartorya fumigata).